A 51-amino-acid chain; its full sequence is Mitochondrial import receptor subunit TOM5 homolog (51 aa).

An N-acetylmethionine modification is found at Met-1. A Glycyl lysine isopeptide (Lys-Gly) (interchain with G-Cter in SUMO2) cross-link involves residue Lys-10. A helical membrane pass occupies residues Ser-27–Leu-45.

This sequence belongs to the Tom5 family. As to quaternary structure, forms part of the preprotein translocase complex of the outer mitochondrial membrane (TOM complex) which consists of at least 7 different proteins (TOMM5, TOMM6, TOMM7, TOMM20, TOMM22, TOMM40 and TOMM70).

It localises to the mitochondrion outer membrane. The polypeptide is Mitochondrial import receptor subunit TOM5 homolog (Mus musculus (Mouse)).